Consider the following 255-residue polypeptide: Taurine import ATP-binding protein TauB (255 aa).

The region spanning 2 to 229 (LQISHLYADY…RFVAGESSRS (228 aa)) is the ABC transporter domain. 34–41 (GPSGCGKT) contributes to the ATP binding site.

The protein belongs to the ABC transporter superfamily. Taurine importer (TC 3.A.1.17.1) family. As to quaternary structure, the complex is composed of two ATP-binding proteins (TauB), two transmembrane proteins (TauC) and a solute-binding protein (TauA).

The protein localises to the cell inner membrane. The catalysed reaction is taurine(out) + ATP + H2O = taurine(in) + ADP + phosphate + H(+). Functionally, part of the ABC transporter complex TauABC involved in taurine import. Responsible for energy coupling to the transport system. The chain is Taurine import ATP-binding protein TauB from Shigella boydii serotype 4 (strain Sb227).